Here is a 529-residue protein sequence, read N- to C-terminus: Bifunctional purine biosynthesis protein PurH (529 aa).

In terms of domain architecture, MGS-like spans 1 to 148 (MQQRRPIRRA…KNHKDVAIVV (148 aa)).

This sequence belongs to the PurH family.

The enzyme catalyses (6R)-10-formyltetrahydrofolate + 5-amino-1-(5-phospho-beta-D-ribosyl)imidazole-4-carboxamide = 5-formamido-1-(5-phospho-D-ribosyl)imidazole-4-carboxamide + (6S)-5,6,7,8-tetrahydrofolate. It catalyses the reaction IMP + H2O = 5-formamido-1-(5-phospho-D-ribosyl)imidazole-4-carboxamide. It functions in the pathway purine metabolism; IMP biosynthesis via de novo pathway; 5-formamido-1-(5-phospho-D-ribosyl)imidazole-4-carboxamide from 5-amino-1-(5-phospho-D-ribosyl)imidazole-4-carboxamide (10-formyl THF route): step 1/1. The protein operates within purine metabolism; IMP biosynthesis via de novo pathway; IMP from 5-formamido-1-(5-phospho-D-ribosyl)imidazole-4-carboxamide: step 1/1. The polypeptide is Bifunctional purine biosynthesis protein PurH (Pectobacterium atrosepticum (strain SCRI 1043 / ATCC BAA-672) (Erwinia carotovora subsp. atroseptica)).